The chain runs to 178 residues: Caveolin-1 (178 aa).

Position 2 is an N-acetylserine (S2). At S2 the chain carries Phosphoserine. The segment at 2 to 94 is required for homooligomerization; it reads SGGKYVDSEG…WKASFTTFTV (93 aa). At 2-104 the chain is on the cytoplasmic side; that stretch reads SGGKYVDSEG…TKYWFYRLLS (103 aa). An N6-acetyllysine; alternate modification is found at K5. A Glycyl lysine isopeptide (Lys-Gly) (interchain with G-Cter in ubiquitin); alternate cross-link involves residue K5. Y6 is subject to Phosphotyrosine. Phosphoserine is present on S9. Y14 carries the phosphotyrosine; by ABL1 modification. Y25 bears the Phosphotyrosine mark. Glycyl lysine isopeptide (Lys-Gly) (interchain with G-Cter in ubiquitin) cross-links involve residues K26, K30, K39, K47, and K57. The segment at 82 to 94 is interaction with CAVIN3; the sequence is DGIWKASFTTFTV. The helical intramembrane region spans 105–125; sequence ALFGIPMALIWGIYFAILSFL. Residues 126 to 178 are Cytoplasmic-facing; it reads HIWAVVPCIKSFLIEIQCISRVYSIYVHTFCDPLFEAIGKIFSNIRINMQKEI. The interacts with SPRY1, SPRY2, SPRY3 and SPRY4 stretch occupies residues 131–142; the sequence is VPCIKSFLIEIQ. S-palmitoyl cysteine attachment occurs at residues C133, C143, and C156. Residues 149-160 form an interacts with SPRY1, SPRY2, and SPRY4 region; it reads SIYVHTFCDPLF. The segment at 167-178 is interacts with SPRY1, SPRY2, SPRY3 and SPRY4; sequence FSNIRINMQKEI.

It belongs to the caveolin family. In terms of assembly, homooligomer. Interacts with GLIPR2. Interacts with NOSTRIN. Interacts with SNAP25 and STX1A. Interacts (via the N-terminus) with DPP4; the interaction is direct. Interacts with CTNNB1, CDH1 and JUP. Interacts with PACSIN2; this interaction induces membrane tubulation. Interacts with SLC7A9. Interacts with BMX and BTK. Interacts with TGFBR1. Interacts with CAVIN3 (via leucine-zipper domain) in a cholesterol-sensitive manner. Interacts with CAVIN1. Interacts with EHD2 in a cholesterol-dependent manner. Forms a ternary complex with UBXN6 and VCP; mediates CAV1 targeting to lysosomes for degradation. Interacts with ABCG1; this interaction regulates ABCG1-mediated cholesterol efflux. Interacts with NEU3; this interaction enhances NEU3 sialidase activity within caveola. Interacts (via C-terminus) with SPRY1, SPRY2 (via C-terminus), SPRY3, and SPRY4. Interacts with IGFBP5; this interaction allows trafficking of IGFBP5 from the plasma membrane to the nucleus. In terms of processing, phosphorylated at Tyr-14 by ABL1 in response to oxidative stress. Ubiquitinated. Undergo monoubiquitination and multi- and/or polyubiquitination. Monoubiquitination of N-terminal lysines promotes integration in a ternary complex with UBXN6 and VCP which promotes oligomeric CAV1 targeting to lysosomes for degradation. Ubiquitinated by ZNRF1; leading to degradation and modulation of the TLR4-mediated immune response.

It localises to the golgi apparatus membrane. The protein localises to the cell membrane. Its subcellular location is the membrane. It is found in the caveola. The protein resides in the membrane raft. Functionally, may act as a scaffolding protein within caveolar membranes. Forms a stable heterooligomeric complex with CAV2 that targets to lipid rafts and drives caveolae formation. Mediates the recruitment of CAVIN proteins (CAVIN1/2/3/4) to the caveolae. Interacts directly with G-protein alpha subunits and can functionally regulate their activity. Involved in the costimulatory signal essential for T-cell receptor (TCR)-mediated T-cell activation. Its binding to DPP4 induces T-cell proliferation and NF-kappa-B activation in a T-cell receptor/CD3-dependent manner. Recruits CTNNB1 to caveolar membranes and may regulate CTNNB1-mediated signaling through the Wnt pathway. Negatively regulates TGFB1-mediated activation of SMAD2/3 by mediating the internalization of TGFBR1 from membrane rafts leading to its subsequent degradation. Binds 20(S)-hydroxycholesterol (20(S)-OHC). The polypeptide is Caveolin-1 (CAV1) (Muntiacus muntjak (Barking deer)).